A 346-amino-acid polypeptide reads, in one-letter code: UPF0065 protein in the TAR-I ttuE-ttuC' intergenic region (346 aa).

The signal sequence occupies residues 1-46 (MQASMLDSQWRLTIFSPRRKVKVSQMNSRFIAVLLTATILPWVAQA).

The protein belongs to the UPF0065 (bug) family.

The protein localises to the periplasm. The chain is UPF0065 protein in the TAR-I ttuE-ttuC' intergenic region from Agrobacterium vitis (Rhizobium vitis).